The sequence spans 92 residues: Nodulation protein F (92 aa).

In terms of domain architecture, Carrier spans 4-88 (QLTLEIISAI…DVVEAVRGLL (85 aa)). Residue serine 45 is modified to O-(pantetheine 4'-phosphoryl)serine.

In terms of processing, 4'-phosphopantetheine is transferred from CoA to a specific serine of apo-NodF.

In terms of biological role, proposed to synthesize nod factor fatty acyl chain. Involved in trans-2,trans-4,trans-6,cis-11-octadecatetraenoic acid biosynthesis. The sequence is that of Nodulation protein F (nodF) from Rhizobium leguminosarum bv. viciae.